Reading from the N-terminus, the 560-residue chain is Chaperonin GroEL 2 (560 aa).

Residues 29-32 (TLGP), 86-90 (DGTTT), G413, 478-480 (NAA), and D494 contribute to the ATP site.

Belongs to the chaperonin (HSP60) family. As to quaternary structure, forms a cylinder of 14 subunits composed of two heptameric rings stacked back-to-back. Interacts with the co-chaperonin GroES.

Its subcellular location is the cytoplasm. It carries out the reaction ATP + H2O + a folded polypeptide = ADP + phosphate + an unfolded polypeptide.. Functionally, together with its co-chaperonin GroES, plays an essential role in assisting protein folding. The GroEL-GroES system forms a nano-cage that allows encapsulation of the non-native substrate proteins and provides a physical environment optimized to promote and accelerate protein folding. The protein is Chaperonin GroEL 2 of Nostoc sp. (strain PCC 7120 / SAG 25.82 / UTEX 2576).